A 331-amino-acid chain; its full sequence is Autoinducer 2 import system permease protein LsrC (331 aa).

9 helical membrane passes run 14–34 (LIAI…YFSL), 39–59 (LVFS…LVML), 70–90 (IAGL…NLPV), 93–113 (LLTL…VTWL), 115–135 (IPAI…MLLL), 157–177 (LNIS…AWIL), 206–226 (IQII…IVFA), 252–272 (GISL…AFFL), and 284–304 (LPAW…LIFD).

It belongs to the binding-protein-dependent transport system permease family. AraH/RbsC subfamily. The complex is composed of two ATP-binding proteins (LsrA), two transmembrane proteins (LsrC and LsrD) and a solute-binding protein (LsrB).

It is found in the cell inner membrane. Functionally, part of the ABC transporter complex LsrABCD involved in autoinducer 2 (AI-2) import. Probably responsible for the translocation of the substrate across the membrane. This is Autoinducer 2 import system permease protein LsrC (lsrC) from Photorhabdus luminescens (Xenorhabdus luminescens).